A 255-amino-acid chain; its full sequence is Small ribosomal subunit protein eS4 (255 aa).

One can recognise an S4 RNA-binding domain in the interval Ile-44–Pro-107.

It belongs to the eukaryotic ribosomal protein eS4 family.

This is Small ribosomal subunit protein eS4 from Ignicoccus hospitalis (strain KIN4/I / DSM 18386 / JCM 14125).